The primary structure comprises 5148 residues: E3 ubiquitin-protein ligase RNF213 (5148 aa).

Positions 38-48 (DNTLVVSSTPE) are enriched in polar residues. Positions 38 to 341 (DNTLVVSSTP…QAAAPEPTSA (304 aa)) are disordered. The segment covering 69 to 78 (PGKELEKPEE) has biased composition (basic and acidic residues). Residues 101–113 (GTISSSEAPSSGL) show a composition bias toward polar residues. Residues 130–146 (PQNQAQQGGAASQPGHP) show a composition bias toward low complexity. At Ser-196 the chain carries Phosphoserine. Basic and acidic residues-rich tracts occupy residues 233 to 245 (SKGE…KKVP), 257 to 267 (AGKETGEDVRK), and 279 to 289 (KHGDQEAELKG). Positions 319 to 335 (AAAVKTQQAAAPQQAAA) are enriched in low complexity. Lys-1128 participates in a covalent cross-link: Glycyl lysine isopeptide (Lys-Gly) (interchain with G-Cter in SUMO2). ATP contacts are provided by residues 1957-1962 (GVGKSL), Glu-2060, Ala-2114, Asp-2116, and Arg-2177. Ser-2234 is modified (phosphoserine). Lys-2460 and Ser-2535 together coordinate ATP. Residues 3435-3465 (EEMEIETSQSKELAEEQMEVEDSEEMKKASD) are a coiled coil. Residues Cys-3947, Cys-3950, Cys-3962, His-3964, Cys-3967, Cys-3970, Cys-3982, Cys-3985, Cys-4451, and His-4455 each coordinate Zn(2+). Residues 3947–3986 (CFICHGDAQDPVCLPCDHVYCLRCIQTWLIPGQMMCPYCL) form an RING-type zinc finger. Residues 4429 to 4501 (MPEDLLVHAR…IRNNEDRTQT (73 aa)) form an RZ-type zinc finger. Residue Cys-4462 is the Nucleophile; for E3 ubiquitin-lipopolysaccharide ligase activity of the active site. Zn(2+) contacts are provided by Cys-4471 and Cys-4474.

The protein belongs to the AAA ATPase family. Monomer. Interacts with UBE2L3/UBCH7; UBE2L3/UBCH7 is the most efficient ubiquitin-conjugating enzyme E2 for the ubiquitin ligase activity. Interacts with UBE2N/UBC13; promoting 'Lys-63'-linked ubiquitination of target proteins.

It is found in the cytoplasm. Its subcellular location is the cytosol. The protein localises to the lipid droplet. The enzyme catalyses S-ubiquitinyl-[E2 ubiquitin-conjugating enzyme]-L-cysteine + [acceptor protein]-L-lysine = [E2 ubiquitin-conjugating enzyme]-L-cysteine + N(6)-ubiquitinyl-[acceptor protein]-L-lysine.. The catalysed reaction is ATP + H2O = ADP + phosphate + H(+). The protein operates within protein modification; protein ubiquitination. Functionally, atypical E3 ubiquitin ligase that can catalyze ubiquitination of both proteins and lipids, and which is involved in various processes, such as lipid metabolism, angiogenesis and cell-autonomous immunity. Acts as a key immune sensor by catalyzing ubiquitination of the lipid A moiety of bacterial lipopolysaccharide (LPS) via its RZ-type zinc-finger: restricts the proliferation of cytosolic bacteria, such as Salmonella, by generating the bacterial ubiquitin coat through the ubiquitination of LPS. Also acts indirectly by mediating the recruitment of the LUBAC complex, which conjugates linear polyubiquitin chains. Ubiquitination of LPS triggers cell-autonomous immunity, such as antibacterial autophagy, leading to degradation of the microbial invader. Involved in lipid metabolism by regulating fat storage and lipid droplet formation; act by inhibiting the lipolytic process. Also regulates lipotoxicity by inhibiting desaturation of fatty acids. Also acts as an E3 ubiquitin-protein ligase via its RING-type zinc finger: mediates 'Lys-63'-linked ubiquitination of target proteins. Involved in the non-canonical Wnt signaling pathway in vascular development: acts by mediating ubiquitination and degradation of FLNA and NFATC2 downstream of RSPO3, leading to inhibit the non-canonical Wnt signaling pathway and promoting vessel regression. Also has ATPase activity; ATPase activity is required for ubiquitination of LPS. This chain is E3 ubiquitin-protein ligase RNF213, found in Mus musculus (Mouse).